The primary structure comprises 392 residues: HCLS1-binding protein 3 (392 aa).

N-acetylmethionine is present on methionine 1. Phosphoserine is present on residues serine 3, serine 139, and serine 194. In terms of domain architecture, PX spans 19-142; it reads GLDLTVPQHQ…EFLGTRSPGA (124 aa). Disordered stretches follow at residues 138–162, 174–265, and 319–364; these read RSPGAAGLTSRDSSVLDGTDSQTGN, DQVA…PLKL, and GAEP…KPQE. Over residues 190-201 the composition is skewed to acidic residues; that stretch reads DAEESLEEEEAL. The segment covering 208-220 has biased composition (basic residues); the sequence is RSKKPKKHPKVAV. Serine 249 is modified (phosphoserine). The segment covering 325-335 has biased composition (pro residues); sequence KPQLKPKPPVA. Position 337 is an N6-acetyllysine (lysine 337).

Binds HCLS1. Interacts with the SH3 domain of HCLS1 in vitro.

In terms of biological role, may be a modulator of IL-2 signaling. In Homo sapiens (Human), this protein is HCLS1-binding protein 3 (HS1BP3).